Reading from the N-terminus, the 301-residue chain is Tetrapeptide repeat homeobox protein 2 (301 aa).

2 disordered regions span residues 1–27 (MQDP…RTVY) and 273–301 (SLST…LLDL). 2 stretches are compositionally biased toward basic and acidic residues: residues 16–26 (PPRRQRQERTV) and 281–292 (YKEEDGFVDKNH). The segment at residues 20–79 (QRQERTVYTESQQKVLEFYFQKDQYPNYDQRLNLAEMLSLREQQLQVWFKNRRAKLARER) is a DNA-binding region (homeobox).

Belongs to the paired homeobox family.

The protein localises to the nucleus. Functionally, transcription factor expressed after fertilization required for zygotic genome activation (ZGA), a critical event in early embryonic development during which the developmental control passes from maternally provided mRNAs to the expression of the zygotic genome after fertilization. Binds and activates expression of key ZGA marker genes, such as NANOGNB, ZSCAN4, DUXB, KLF5 and DPPA3. Binds to regulatory DNA sequences containing a 5'-TAATCC-3' sequence motif. The chain is Tetrapeptide repeat homeobox protein 2 from Homo sapiens (Human).